A 61-amino-acid polypeptide reads, in one-letter code: Probable tautomerase BH3814 (61 aa).

Catalysis depends on Pro2, which acts as the Proton acceptor; via imino nitrogen.

The protein belongs to the 4-oxalocrotonate tautomerase family.

The polypeptide is Probable tautomerase BH3814 (Halalkalibacterium halodurans (strain ATCC BAA-125 / DSM 18197 / FERM 7344 / JCM 9153 / C-125) (Bacillus halodurans)).